Reading from the N-terminus, the 444-residue chain is Probable glycine dehydrogenase (decarboxylating) subunit 1 (444 aa).

It belongs to the GcvP family. N-terminal subunit subfamily. In terms of assembly, the glycine cleavage system is composed of four proteins: P, T, L and H. In this organism, the P 'protein' is a heterodimer of two subunits.

It carries out the reaction N(6)-[(R)-lipoyl]-L-lysyl-[glycine-cleavage complex H protein] + glycine + H(+) = N(6)-[(R)-S(8)-aminomethyldihydrolipoyl]-L-lysyl-[glycine-cleavage complex H protein] + CO2. Its function is as follows. The glycine cleavage system catalyzes the degradation of glycine. The P protein binds the alpha-amino group of glycine through its pyridoxal phosphate cofactor; CO(2) is released and the remaining methylamine moiety is then transferred to the lipoamide cofactor of the H protein. This Moorella thermoacetica (strain ATCC 39073 / JCM 9320) protein is Probable glycine dehydrogenase (decarboxylating) subunit 1.